Reading from the N-terminus, the 299-residue chain is Tyrosine recombinase XerD (299 aa).

Positions 3-88 constitute a Core-binding (CB) domain; the sequence is QQDNPLIEQF…AMRRLFQYLY (86 aa). The 185-residue stretch at 109-293 folds into the Tyr recombinase domain; it reads RLPKDLSEAQ…ATERLRQLHQ (185 aa). Catalysis depends on residues Arg-149, Lys-173, His-245, Arg-248, and His-271. Tyr-280 functions as the O-(3'-phospho-DNA)-tyrosine intermediate in the catalytic mechanism.

The protein belongs to the 'phage' integrase family. XerD subfamily. In terms of assembly, forms a cyclic heterotetrameric complex composed of two molecules of XerC and two molecules of XerD, in which XerC interacts with XerD via its C-terminal region, XerD interacts with XerC via its C-terminal region and so on.

It localises to the cytoplasm. Its activity is regulated as follows. FtsK may regulate the catalytic switch between XerC and XerD in the heterotetrameric complex during the two steps of the recombination process. In terms of biological role, site-specific tyrosine recombinase, which acts by catalyzing the cutting and rejoining of the recombining DNA molecules. Binds cooperatively to specific DNA consensus sequences that are separated from XerC binding sites by a short central region, forming the heterotetrameric XerC-XerD complex that recombines DNA substrates. The complex is essential to convert dimers of the bacterial chromosome into monomers to permit their segregation at cell division. It also contributes to the segregational stability of plasmids. In the complex XerD specifically exchanges the bottom DNA strands. This Yersinia pestis protein is Tyrosine recombinase XerD.